A 367-amino-acid chain; its full sequence is MTLKTLTATLVASLAFAPLAHADITIGLIAPLTGPVAAYGDQVKNGAQTAVDEINKKGGILGEKVVLELADDAGEPKQGVSAANKVVGDGIRFVVGPVTSGVAIPVSDVLAENGVLMVTPTATAPDLTKRGLTNVLRTCGRDDQQAEVAAKYVLKNFKDKRVAIVNDKGAYGKGLADAFKATLNAGGITEVVNDAITPGDKDFSALTTRIKSEKVDVVYFGGYHPEGGLLARQLHDLAANATIIGGDGLSNTEFWAIGTDAAGGTIFTNASDATKSPDSKAAADALAAKNIPAEAFTLNAYAAVEVLKAGIEKAGSAEDAEAVATALKDGKEIPTAIGKVTYGETGDLTSQSFSLYKWEAGKIVAAE.

The first 22 residues, 1-22, serve as a signal peptide directing secretion; the sequence is MTLKTLTATLVASLAFAPLAHA.

The protein belongs to the leucine-binding protein family. As to quaternary structure, the complex is composed of two ATP-binding proteins (BraF and BraG), two transmembrane proteins (BraD and BraE) and a solute-binding protein (BraC or BraC3).

Its subcellular location is the periplasm. In terms of biological role, part of the ABC transporter complex BraDEFGC/C3 involved in transport of branched-chain amino acids Leu, Ile and Val (LIV). Essential for the development of bacteroids, the differentiated legume-symbiotic forms of this bacterium, and for the effective N(2) fixation by them. The protein is Leu/Ile/Val-binding protein BraC3 of Rhizobium johnstonii (strain DSM 114642 / LMG 32736 / 3841) (Rhizobium leguminosarum bv. viciae).